The following is a 520-amino-acid chain: Transactivator/viroplasmin protein (520 aa).

A disordered region spans residues 486 to 520; sequence VQDASADSGPKDGPPPTRSIVEKEDVPTTSSKQVD.

Belongs to the caulimoviridae viroplasmin family.

The protein localises to the host cytoplasm. Functionally, enhances the ribosomal termination-reinitiation event leading to the translation of major open reading frames on the polycistronic viral RNAs. The polypeptide is Transactivator/viroplasmin protein (Cauliflower mosaic virus (strain BBC) (CaMV)).